We begin with the raw amino-acid sequence, 333 residues long: Malate dehydrogenase (333 aa).

NAD(+)-binding positions include 10–15 (GGGQIG) and Asp34. 2 residues coordinate substrate: Arg83 and Arg89. NAD(+) is bound by residues Asn96 and 119-121 (ITN). Positions 121 and 152 each coordinate substrate. His176 serves as the catalytic Proton acceptor.

Belongs to the LDH/MDH superfamily. MDH type 3 family.

The catalysed reaction is (S)-malate + NAD(+) = oxaloacetate + NADH + H(+). Catalyzes the reversible oxidation of malate to oxaloacetate. The chain is Malate dehydrogenase from Parvibaculum lavamentivorans (strain DS-1 / DSM 13023 / NCIMB 13966).